The sequence spans 721 residues: Glucans biosynthesis glucosyltransferase H (721 aa).

A run of 7 helical transmembrane segments spans residues 54-74, 85-105, 404-424, 458-478, 493-513, 548-568, and 569-589; these read LIMV…YQVL, VVLV…VSAL, GIGA…GILI, FAGT…LVLI, FGGV…MMVF, YALP…VSWP, and LLLW…VALL.

This sequence belongs to the glycosyltransferase 2 family. OpgH subfamily.

Its subcellular location is the cell inner membrane. It functions in the pathway glycan metabolism; osmoregulated periplasmic glucan (OPG) biosynthesis. Involved in the biosynthesis of osmoregulated periplasmic glucans (OPGs). In Rhodopseudomonas palustris (strain TIE-1), this protein is Glucans biosynthesis glucosyltransferase H.